The sequence spans 282 residues: Pantothenate synthetase (282 aa).

ATP is bound at residue 30–37; that stretch reads MGALHQGH. His-37 functions as the Proton donor in the catalytic mechanism. Position 61 (Gln-61) interacts with (R)-pantoate. Beta-alanine is bound at residue Gln-61. 149–152 serves as a coordination point for ATP; it reads GEKD. Gln-155 serves as a coordination point for (R)-pantoate. ATP-binding positions include Leu-178 and 186–189; that span reads MSSR.

This sequence belongs to the pantothenate synthetase family. Homodimer.

It is found in the cytoplasm. The enzyme catalyses (R)-pantoate + beta-alanine + ATP = (R)-pantothenate + AMP + diphosphate + H(+). It participates in cofactor biosynthesis; (R)-pantothenate biosynthesis; (R)-pantothenate from (R)-pantoate and beta-alanine: step 1/1. Catalyzes the condensation of pantoate with beta-alanine in an ATP-dependent reaction via a pantoyl-adenylate intermediate. This chain is Pantothenate synthetase, found in Flavobacterium psychrophilum (strain ATCC 49511 / DSM 21280 / CIP 103535 / JIP02/86).